We begin with the raw amino-acid sequence, 114 residues long: Holo-[acyl-carrier-protein] synthase (114 aa).

Residues Asp8 and Glu58 each coordinate Mg(2+).

Belongs to the P-Pant transferase superfamily. AcpS family. Mg(2+) serves as cofactor.

It is found in the cytoplasm. The enzyme catalyses apo-[ACP] + CoA = holo-[ACP] + adenosine 3',5'-bisphosphate + H(+). Its function is as follows. Transfers the 4'-phosphopantetheine moiety from coenzyme A to a Ser of acyl-carrier-protein. The protein is Holo-[acyl-carrier-protein] synthase of Mycoplasma genitalium (strain ATCC 33530 / DSM 19775 / NCTC 10195 / G37) (Mycoplasmoides genitalium).